The chain runs to 874 residues: Alanine--tRNA ligase (874 aa).

4 residues coordinate Zn(2+): His564, His568, Cys665, and His669.

This sequence belongs to the class-II aminoacyl-tRNA synthetase family. Requires Zn(2+) as cofactor.

It localises to the cytoplasm. The catalysed reaction is tRNA(Ala) + L-alanine + ATP = L-alanyl-tRNA(Ala) + AMP + diphosphate. Functionally, catalyzes the attachment of alanine to tRNA(Ala) in a two-step reaction: alanine is first activated by ATP to form Ala-AMP and then transferred to the acceptor end of tRNA(Ala). Also edits incorrectly charged Ser-tRNA(Ala) and Gly-tRNA(Ala) via its editing domain. The polypeptide is Alanine--tRNA ligase (Burkholderia multivorans (strain ATCC 17616 / 249)).